A 605-amino-acid chain; its full sequence is Alpha-fetoprotein (605 aa).

The N-terminal stretch at 1-18 (MKWITPASLILLLHFAAS) is a signal peptide. 3 Albumin domains span residues 19 to 207 (KALH…SIAK), 208 to 398 (ELRE…EELQ), and 399 to 597 (KHIE…KLIS). 8 disulfides stabilise this stretch: Cys95/Cys110, Cys109/Cys120, Cys144/Cys189, Cys188/Cys197, Cys220/Cys266, Cys265/Cys273, Cys285/Cys299, and Cys298/Cys309. 3 positions are modified to phosphoserine: Ser107, Ser111, and Ser113. Residue Asn247 is glycosylated (N-linked (GlcNAc...) asparagine). The residue at position 340 (Ser340) is a Phosphoserine. 7 cysteine pairs are disulfide-bonded: Cys380–Cys389, Cys412–Cys458, Cys457–Cys468, Cys481–Cys497, Cys496–Cys507, Cys534–Cys579, and Cys578–Cys587. Ser440 bears the Phosphoserine mark. A glycan (N-linked (GlcNAc...) asparagine) is linked at Asn498.

Belongs to the ALB/AFP/VDB family. Post-translationally, glycosylated; contains two glycans. In terms of processing, sulfated. In terms of tissue distribution, plasma.

It localises to the secreted. Its function is as follows. Binds estrogens, fatty acids and metals. The chain is Alpha-fetoprotein (Afp) from Mus musculus (Mouse).